A 407-amino-acid chain; its full sequence is [Pyruvate dehydrogenase (acetyl-transferring)] kinase isozyme 2, mitochondrial (407 aa).

In terms of domain architecture, Histidine kinase spans 135–364 (LEYKDTYGDD…DAVIYLKALS (230 aa)). A phosphotyrosine mark is found at Tyr215 and Tyr216. ATP-binding positions include 251–258 (ELFKNAMR), Asp290, 309–310 (ST), and 325–330 (GFGYGL). Lys376 carries the N6-succinyllysine modification.

It belongs to the PDK/BCKDK protein kinase family. In terms of assembly, homodimer, and heterodimer with PDK1. Interacts with the pyruvate dehydrogenase complex subunit DLAT, and is part of the multimeric pyruvate dehydrogenase complex that contains multiple copies of pyruvate dehydrogenase (E1), dihydrolipoamide acetyltransferase (DLAT, E2) and lipoamide dehydrogenase (DLD, E3). In terms of tissue distribution, expressed in many tissues, with the highest level in heart and skeletal muscle, intermediate levels in brain, kidney, pancreas and liver, and low levels in placenta and lung.

The protein localises to the mitochondrion matrix. It catalyses the reaction L-seryl-[pyruvate dehydrogenase E1 alpha subunit] + ATP = O-phospho-L-seryl-[pyruvate dehydrogenase E1 alpha subunit] + ADP + H(+). Its activity is regulated as follows. Activity is enhanced by binding to the pyruvate dehydrogenase subunit DLAT. Inhibited by ADP and pyruvate; these compounds interfere with DLAT binding and thereby inhibit kinase activity. Inhibited by dichloroacetate. Inhibited by AZD7545; this compound interferes with DLAT binding and thereby inhibits kinase activity. Functionally, kinase that plays a key role in the regulation of glucose and fatty acid metabolism and homeostasis via phosphorylation of the pyruvate dehydrogenase subunits PDHA1 and PDHA2. This inhibits pyruvate dehydrogenase activity, and thereby regulates metabolite flux through the tricarboxylic acid cycle, down-regulates aerobic respiration and inhibits the formation of acetyl-coenzyme A from pyruvate. Inhibition of pyruvate dehydrogenase decreases glucose utilization and increases fat metabolism. Mediates cellular responses to insulin. Plays an important role in maintaining normal blood glucose levels and in metabolic adaptation to nutrient availability. Via its regulation of pyruvate dehydrogenase activity, plays an important role in maintaining normal blood pH and in preventing the accumulation of ketone bodies under starvation. Plays a role in the regulation of cell proliferation and in resistance to apoptosis under oxidative stress. Plays a role in p53/TP53-mediated apoptosis. The sequence is that of [Pyruvate dehydrogenase (acetyl-transferring)] kinase isozyme 2, mitochondrial (PDK2) from Homo sapiens (Human).